The chain runs to 94 residues: uncharacterized protein (94 aa).

This is an uncharacterized protein from Escherichia coli (strain K12).